A 223-amino-acid chain; its full sequence is Small ribosomal subunit protein uS3 (223 aa).

One can recognise a KH type-2 domain in the interval 39–107; that stretch reads VREFLHKKLA…PVQINIEEVR (69 aa).

Belongs to the universal ribosomal protein uS3 family. Part of the 30S ribosomal subunit. Forms a tight complex with proteins S10 and S14.

In terms of biological role, binds the lower part of the 30S subunit head. Binds mRNA in the 70S ribosome, positioning it for translation. The polypeptide is Small ribosomal subunit protein uS3 (Francisella tularensis subsp. mediasiatica (strain FSC147)).